The primary structure comprises 218 residues: Adenylate kinase (218 aa).

11 to 16 (GAGKGT) is an ATP binding site. The segment at 31–60 (STGDMFREAMANKTKVGLEAKSYIDKGNLV) is NMP. AMP contacts are provided by residues Thr-32, Arg-37, 58–60 (NLV), 86–89 (GFPR), and Gln-93. Positions 127 to 165 (ARYMCKNCGATYNKISKQPKVEGTCDRCGSHEFYQREDD) are LID. Arg-128 provides a ligand contact to ATP. Residues Cys-131 and Cys-134 each contribute to the Zn(2+) site. 137-138 (TY) serves as a coordination point for ATP. Zn(2+) contacts are provided by Cys-151 and Cys-154. Residues Arg-162 and Arg-173 each contribute to the AMP site. Gln-201 is a binding site for ATP.

It belongs to the adenylate kinase family. As to quaternary structure, monomer.

The protein resides in the cytoplasm. The catalysed reaction is AMP + ATP = 2 ADP. The protein operates within purine metabolism; AMP biosynthesis via salvage pathway; AMP from ADP: step 1/1. Its function is as follows. Catalyzes the reversible transfer of the terminal phosphate group between ATP and AMP. Plays an important role in cellular energy homeostasis and in adenine nucleotide metabolism. This chain is Adenylate kinase, found in Lactobacillus acidophilus (strain ATCC 700396 / NCK56 / N2 / NCFM).